The following is a 94-amino-acid chain: Large ribosomal subunit protein bL25 (94 aa).

Belongs to the bacterial ribosomal protein bL25 family. In terms of assembly, part of the 50S ribosomal subunit; part of the 5S rRNA/L5/L18/L25 subcomplex. Contacts the 5S rRNA. Binds to the 5S rRNA independently of L5 and L18.

In terms of biological role, this is one of the proteins that binds to the 5S RNA in the ribosome where it forms part of the central protuberance. This is Large ribosomal subunit protein bL25 from Pectobacterium carotovorum subsp. carotovorum (strain PC1).